The sequence spans 360 residues: Photosystem II protein D1 (360 aa).

The next 3 membrane-spanning stretches (helical) occupy residues Y29–T46, H118–L133, and W142–A156. H118 serves as a coordination point for chlorophyll a. Y126 contributes to the pheophytin a binding site. [CaMn4O5] cluster-binding residues include D170 and E189. Residues F197 to L218 form a helical membrane-spanning segment. Position 198 (H198) interacts with chlorophyll a. A quinone is bound by residues H215 and S264–F265. H215 provides a ligand contact to Fe cation. H272 contacts Fe cation. Residues F274 to M288 form a helical membrane-spanning segment. Positions 332, 333, 342, and 344 each coordinate [CaMn4O5] cluster. Residues S345 to G360 constitute a propeptide that is removed on maturation.

Belongs to the reaction center PufL/M/PsbA/D family. As to quaternary structure, PSII is composed of 1 copy each of membrane proteins PsbA, PsbB, PsbC, PsbD, PsbE, PsbF, PsbH, PsbI, PsbJ, PsbK, PsbL, PsbM, PsbT, PsbX, PsbY, PsbZ, Psb30/Ycf12, peripheral proteins PsbO, CyanoQ (PsbQ), PsbU, PsbV and a large number of cofactors. It forms dimeric complexes. The D1/D2 heterodimer binds P680, chlorophylls that are the primary electron donor of PSII, and subsequent electron acceptors. It shares a non-heme iron and each subunit binds pheophytin, quinone, additional chlorophylls, carotenoids and lipids. D1 provides most of the ligands for the Mn4-Ca-O5 cluster of the oxygen-evolving complex (OEC). There is also a Cl(-1) ion associated with D1 and D2, which is required for oxygen evolution. The PSII complex binds additional chlorophylls, carotenoids and specific lipids. is required as a cofactor. Post-translationally, tyr-161 forms a radical intermediate that is referred to as redox-active TyrZ, YZ or Y-Z. C-terminally processed by CtpA; processing is essential to allow assembly of the oxygen-evolving complex and thus photosynthetic growth.

Its subcellular location is the cellular thylakoid membrane. It carries out the reaction 2 a plastoquinone + 4 hnu + 2 H2O = 2 a plastoquinol + O2. In terms of biological role, photosystem II (PSII) is a light-driven water:plastoquinone oxidoreductase that uses light energy to abstract electrons from H(2)O, generating O(2) and a proton gradient subsequently used for ATP formation. It consists of a core antenna complex that captures photons, and an electron transfer chain that converts photonic excitation into a charge separation. The D1/D2 (PsbA/PsbD) reaction center heterodimer binds P680, the primary electron donor of PSII as well as several subsequent electron acceptors. The polypeptide is Photosystem II protein D1 (Microcystis aeruginosa (strain NIES-843 / IAM M-2473)).